The primary structure comprises 491 residues: [Pyruvate dehydrogenase (acetyl-transferring)] kinase 2, mitochondrial (491 aa).

Residues 153–480 (PTIRTLEDAS…DVVLKLGNLM (328 aa)) form the Histidine kinase domain. ATP-binding positions include 300-307 (EILRNTYE), D341, 359-360 (SK), and 383-446 (DEVH…GIGL).

Belongs to the PDK/BCKDK protein kinase family. In terms of assembly, interacts with PKP1.

It is found in the mitochondrion matrix. The enzyme catalyses L-seryl-[pyruvate dehydrogenase E1 alpha subunit] + ATP = O-phospho-L-seryl-[pyruvate dehydrogenase E1 alpha subunit] + ADP + H(+). Inhibits the mitochondrial pyruvate dehydrogenase complex by phosphorylation of the E1 alpha subunit (PDA1), thus contributing to the regulation of glucose metabolism. This is [Pyruvate dehydrogenase (acetyl-transferring)] kinase 2, mitochondrial from Saccharomyces cerevisiae (strain ATCC 204508 / S288c) (Baker's yeast).